The chain runs to 124 residues: Chemotaxis protein CheY1 (124 aa).

In terms of domain architecture, Response regulatory spans 2 to 120 (KLLVVDDSST…VLKEKLEVVL (119 aa)). Positions 7, 8, 53, and 55 each coordinate Mg(2+). Asp-53 carries the 4-aspartylphosphate modification.

In terms of assembly, interacts (when phosphorylated) with FliM. The cofactor is Mg(2+). In terms of processing, phosphorylated by CheAY. Dephosphorylated (inactivated) by CheZ.

It localises to the cytoplasm. Chemotactic response regulator protein that modulates the rotation direction of bacterial flagellar motors. Plays an important role in the colonization and infection of Helicobacter pylori. Upon phosphorylation by CheA, interacts with the flagellar motor protein FliM to cause clockwise flagellar rotation and bacterial reversals, as opposed to straight swimming when CheY1 is not phosphorylated. The chain is Chemotaxis protein CheY1 (cheY1) from Helicobacter pylori (strain J99 / ATCC 700824) (Campylobacter pylori J99).